Reading from the N-terminus, the 360-residue chain is DNA polymerase IV (360 aa).

Residues 6-187 (IIHVDMDAFY…LKIGDLHGVG (182 aa)) enclose the UmuC domain. Mg(2+)-binding residues include aspartate 10 and aspartate 105. Residue glutamate 106 is part of the active site.

Belongs to the DNA polymerase type-Y family. Monomer. The cofactor is Mg(2+).

Its subcellular location is the cytoplasm. It carries out the reaction DNA(n) + a 2'-deoxyribonucleoside 5'-triphosphate = DNA(n+1) + diphosphate. In terms of biological role, poorly processive, error-prone DNA polymerase involved in untargeted mutagenesis. Copies undamaged DNA at stalled replication forks, which arise in vivo from mismatched or misaligned primer ends. These misaligned primers can be extended by PolIV. Exhibits no 3'-5' exonuclease (proofreading) activity. May be involved in translesional synthesis, in conjunction with the beta clamp from PolIII. In Exiguobacterium sibiricum (strain DSM 17290 / CCUG 55495 / CIP 109462 / JCM 13490 / 255-15), this protein is DNA polymerase IV.